The following is a 336-amino-acid chain: Phospho-N-acetylmuramoyl-pentapeptide-transferase (336 aa).

Helical transmembrane passes span 3-23 (LTLI…PYFI), 53-73 (GGTV…LFSI), 78-98 (SLAL…IGFL), 118-138 (LALQ…PSGI), 143-163 (VFGY…FWVV), 174-194 (GIDG…GVIA), 200-220 (FDVL…FCFN), 226-246 (VFMG…ISIA), 254-274 (LIIG…VFYF), and 316-336 (AFLW…LYVF).

It belongs to the glycosyltransferase 4 family. MraY subfamily. Mg(2+) serves as cofactor.

The protein localises to the cell membrane. It catalyses the reaction UDP-N-acetyl-alpha-D-muramoyl-L-alanyl-gamma-D-glutamyl-L-lysyl-D-alanyl-D-alanine + di-trans,octa-cis-undecaprenyl phosphate = Mur2Ac(oyl-L-Ala-gamma-D-Glu-L-Lys-D-Ala-D-Ala)-di-trans,octa-cis-undecaprenyl diphosphate + UMP. It participates in cell wall biogenesis; peptidoglycan biosynthesis. Functionally, catalyzes the initial step of the lipid cycle reactions in the biosynthesis of the cell wall peptidoglycan: transfers peptidoglycan precursor phospho-MurNAc-pentapeptide from UDP-MurNAc-pentapeptide onto the lipid carrier undecaprenyl phosphate, yielding undecaprenyl-pyrophosphoryl-MurNAc-pentapeptide, known as lipid I. The chain is Phospho-N-acetylmuramoyl-pentapeptide-transferase from Streptococcus pyogenes serotype M18 (strain MGAS8232).